We begin with the raw amino-acid sequence, 291 residues long: Tyrosine recombinase XerD (291 aa).

The region spanning 1–82 (MEEGLIDRLL…ACKRLYIWME (82 aa)) is the Core-binding (CB) domain. In terms of domain architecture, Tyr recombinase spans 103–285 (NIPTLITEQQ…ANVWLQGVVK (183 aa)). Active-site residues include Arg143, Lys167, His237, Arg240, and His263. Catalysis depends on Tyr272, which acts as the O-(3'-phospho-DNA)-tyrosine intermediate.

This sequence belongs to the 'phage' integrase family. XerD subfamily. Forms a cyclic heterotetrameric complex composed of two molecules of XerC and two molecules of XerD.

The protein resides in the cytoplasm. Its function is as follows. Site-specific tyrosine recombinase, which acts by catalyzing the cutting and rejoining of the recombining DNA molecules. The XerC-XerD complex is essential to convert dimers of the bacterial chromosome into monomers to permit their segregation at cell division. It also contributes to the segregational stability of plasmids. The sequence is that of Tyrosine recombinase XerD from Neisseria meningitidis serogroup B (strain ATCC BAA-335 / MC58).